Consider the following 95-residue polypeptide: MTFENRNNRKTLTGKVVSAQKTQKTIIVEVDRYKKHLLYGKRFKKTKRYAVHDEAQVAKVNDMVMIMETRPLSKTKHFRLYQVLSTASDVEKEAK.

Belongs to the universal ribosomal protein uS17 family. As to quaternary structure, part of the 30S ribosomal subunit.

Its function is as follows. One of the primary rRNA binding proteins, it binds specifically to the 5'-end of 16S ribosomal RNA. The protein is Small ribosomal subunit protein uS17 of Mycoplasmopsis synoviae (strain 53) (Mycoplasma synoviae).